A 1551-amino-acid chain; its full sequence is Serine/threonine-protein kinase MRCK gamma (1551 aa).

The Protein kinase domain occupies F71 to F337. ATP-binding positions include I77–V85 and K100. D195 functions as the Proton acceptor in the catalytic mechanism. 2 positions are modified to phosphoserine; by autocatalysis: S216 and S228. T234 bears the Phosphothreonine; by autocatalysis mark. Positions E338–S408 constitute an AGC-kinase C-terminal domain. Coiled-coil stretches lie at residues E406–E678 and K730–G802. 4 disordered regions span residues K467 to D486, E655 to S675, R801 to R849, and T863 to F886. Residues E655–E674 show a composition bias toward basic and acidic residues. A compositionally biased stretch (basic and acidic residues) spans A835 to R849. The Phorbol-ester/DAG-type zinc-finger motif lies at S878–C927. The 120-residue stretch at G947 to R1066 folds into the PH domain. One can recognise a CNH domain in the interval L1092–F1366. The region spanning I1437–G1450 is the CRIB domain. The interval N1442–P1551 is disordered. A compositionally biased stretch (basic and acidic residues) spans G1457–R1470. At S1482 the chain carries Phosphoserine. A compositionally biased stretch (polar residues) spans T1511–Q1533. Over residues S1540 to P1551 the composition is skewed to low complexity.

It belongs to the protein kinase superfamily. AGC Ser/Thr protein kinase family. DMPK subfamily. In terms of assembly, homodimer and homotetramer via the coiled coil regions. Interacts tightly with GTP-bound but not GDP-bound CDC42. Mg(2+) serves as cofactor. In terms of tissue distribution, expressed in heart and skeletal muscle.

It localises to the cytoplasm. It carries out the reaction L-seryl-[protein] + ATP = O-phospho-L-seryl-[protein] + ADP + H(+). The enzyme catalyses L-threonyl-[protein] + ATP = O-phospho-L-threonyl-[protein] + ADP + H(+). Its activity is regulated as follows. Maintained in an inactive, closed conformation by an interaction between the kinase domain and the negative autoregulatory C-terminal coiled-coil region. Agonist binding to the phorbol ester binding site disrupts this, releasing the kinase domain to allow N-terminus-mediated dimerization and kinase activation by transautophosphorylation. Its function is as follows. May act as a downstream effector of CDC42 in cytoskeletal reorganization. Contributes to the actomyosin contractility required for cell invasion, through the regulation of MYPT1 and thus MLC2 phosphorylation. This chain is Serine/threonine-protein kinase MRCK gamma, found in Homo sapiens (Human).